Reading from the N-terminus, the 53-residue chain is Unknown protein from 2D-PAGE of needles (53 aa).

The chain is Unknown protein from 2D-PAGE of needles from Pinus pinaster (Maritime pine).